Consider the following 96-residue polypeptide: Defensin-like protein 69 (96 aa).

The first 19 residues, 1-19, serve as a signal peptide directing secretion; the sequence is MGSSKLLVAFTLIVMMTIS. Cystine bridges form between cysteine 37–cysteine 86, cysteine 41–cysteine 64, cysteine 50–cysteine 84, and cysteine 54–cysteine 85.

This sequence belongs to the DEFL family.

The protein localises to the secreted. The sequence is that of Defensin-like protein 69 from Arabidopsis thaliana (Mouse-ear cress).